The sequence spans 1218 residues: Cytosolic carboxypeptidase 1 (1218 aa).

2 disordered regions span residues 476–512 (VVMKERASPKGEEAKEDPKGHDRTLPQQLGGQSRVAP) and 590–617 (TEDDEDTESHSSTEQAPSVEASDGPTLH). Basic and acidic residues predominate over residues 477–499 (VMKERASPKGEEAKEDPKGHDRT). In terms of domain architecture, Peptidase M14 spans 840–1130 (YPYTYSTLQM…KFCVGLLRLK (291 aa)). 3 residues coordinate Zn(2+): His912, Glu915, and His1009. Glu1094 acts as the Proton donor/acceptor in catalysis. Position 1160 is a phosphoserine (Ser1160). Residues 1193–1218 (ENTGDYEPSAQEEALSDSEVSRTHLI) are disordered.

Belongs to the peptidase M14 family. As to quaternary structure, interacts with MYLK. It depends on Zn(2+) as a cofactor. In terms of tissue distribution, widely expressed. Highly expressed in the cerebellum and cortex of adult mouse brain. Expressed at similar levels in both the cerebellum and the cortex throughout all developmental stages. Also expressed in sciatic nerve transection, spinal motor neurons undergoing axon regeneration, testis, heart, eye, lung, pancreas, intestine, stomach, pituitary, spleen, adrenal, kidney and in developing brain. Expression in cranial motor nuclei is the same as that observed in uninjured primary motor neurons. Expression is prevalent in sensory neurons and hippocampal CA3 neurons in addition to regenerating motor neurons.

The protein resides in the cytoplasm. Its subcellular location is the cytosol. It localises to the nucleus. It is found in the mitochondrion. It carries out the reaction (L-glutamyl)(n+1)-gamma-L-glutamyl-L-glutamyl-[protein] + H2O = (L-glutamyl)(n)-gamma-L-glutamyl-L-glutamyl-[protein] + L-glutamate. It catalyses the reaction C-terminal L-alpha-aminoacyl-L-glutamyl-L-glutamyl-[tubulin] + H2O = C-terminal L-alpha-aminoacyl-L-glutamyl-[tubulin] + L-glutamate. Metallocarboxypeptidase that mediates protein deglutamylation of tubulin and non-tubulin target proteins. Catalyzes the removal of polyglutamate side chains present on the gamma-carboxyl group of glutamate residues within the C-terminal tail of alpha- and beta-tubulin. Specifically cleaves tubulin long-side-chains, while it is not able to remove the branching point glutamate. Also catalyzes the removal of polyglutamate residues from the carboxy-terminus of alpha-tubulin as well as non-tubulin proteins such as MYLK. Involved in KLF4 deglutamylation which promotes KLF4 proteasome-mediated degradation, thereby negatively regulating cell pluripotency maintenance and embryogenesis. The chain is Cytosolic carboxypeptidase 1 from Mus musculus (Mouse).